A 135-amino-acid polypeptide reads, in one-letter code: MRHGKVHRKLNRTAEHRKAMFANMCASLIKHEQIVTTLPKAKELRPIVEKLVTLGKKGGLALRRQAISEMKDQDQVRKLFDVLAKRYADRQGGYTRIIKAGFRYGDNAPMAVIEFVDRDENAKGLDSGQAEEKAA.

Belongs to the bacterial ribosomal protein bL17 family. Part of the 50S ribosomal subunit. Contacts protein L32.

This Rhodopseudomonas palustris (strain BisB18) protein is Large ribosomal subunit protein bL17.